Consider the following 260-residue polypeptide: Lys-63-specific deubiquitinase BRCC36 (260 aa).

The MPN domain occupies 6-149; the sequence is VHLESDAFLV…YTCFQSVQAQ (144 aa). His92, His94, and Asp105 together coordinate Zn(2+). The JAMM motif motif lies at 92-105; sequence HSHPHITVWPSHVD.

This sequence belongs to the peptidase M67A family. BRCC36 subfamily. In terms of assembly, component of the BRCA1-A complex, at least composed of brca1, bard1, uimc1/rap80, abraxas1, brcc3/brcc36, babam2 and babam1/nba1. In the BRCA1-A complex, interacts directly with abraxas1 and babam2. Component of the BRISC complex, at least composed of abraxas2, brcc3/brcc36, babam2 and babam1/nba1. Within the complex, interacts directly with abraxas2. Both the BRCA1-A complex and the BRISC complex bind polyubiquitin. The cofactor is Zn(2+).

The protein localises to the nucleus. It localises to the cytoplasm. The protein resides in the cytoskeleton. Its subcellular location is the spindle pole. Metalloprotease that specifically cleaves 'Lys-63'-linked polyubiquitin chains. Does not have activity toward 'Lys-48'-linked polyubiquitin chains. Component of the BRCA1-A complex, a complex that specifically recognizes 'Lys-63'-linked ubiquitinated histones H2A and H2AX at DNA lesions sites, leading to target the brca1-bard1 heterodimer to sites of DNA damage at double-strand breaks (DSBs). In the BRCA1-A complex, it specifically removes 'Lys-63'-linked ubiquitin on histones H2A and H2AX, antagonizing the rnf8-dependent ubiquitination at double-strand breaks (DSBs). Catalytic subunit of the BRISC complex, a multiprotein complex that specifically cleaves 'Lys-63'-linked ubiquitin in various substrates. Mediates the specific 'Lys-63'-specific deubiquitination associated with the COP9 signalosome complex (CSN), via the interaction of the BRISC complex with the CSN complex. The BRISC complex is required for normal mitotic spindle assembly and microtubule attachment to kinetochores via its role in deubiquitinating numa1. Plays a role in interferon signaling via its role in the deubiquitination of the interferon receptor ifnar1; deubiquitination increases ifnar1 activity by enhancing its stability and cell surface expression. Acts as a regulator of the NLRP3 inflammasome by mediating deubiquitination of nlrp3. Down-regulates the response to bacterial lipopolysaccharide (LPS) via its role in ifnar1 deubiquitination. The chain is Lys-63-specific deubiquitinase BRCC36 (brcc3) from Salmo salar (Atlantic salmon).